We begin with the raw amino-acid sequence, 103 residues long: Small ribosomal subunit protein uS14c (103 aa).

This sequence belongs to the universal ribosomal protein uS14 family. Part of the 30S ribosomal subunit.

It localises to the plastid. The protein resides in the chloroplast. In terms of biological role, binds 16S rRNA, required for the assembly of 30S particles. This Agrostis stolonifera (Creeping bentgrass) protein is Small ribosomal subunit protein uS14c.